The chain runs to 295 residues: Tyrosine recombinase XerD (295 aa).

The 85-residue stretch at 1–85 (MDTIIEEYLK…TIRSFHQFAL (85 aa)) folds into the Core-binding (CB) domain. One can recognise a Tyr recombinase domain in the interval 106-289 (KLPDVLEINE…SKSQIRKMYN (184 aa)). Catalysis depends on residues R146, K170, H241, R244, and H267. Y276 (O-(3'-phospho-DNA)-tyrosine intermediate) is an active-site residue.

It belongs to the 'phage' integrase family. XerD subfamily. Forms a cyclic heterotetrameric complex composed of two molecules of XerC and two molecules of XerD.

Its subcellular location is the cytoplasm. Site-specific tyrosine recombinase, which acts by catalyzing the cutting and rejoining of the recombining DNA molecules. The XerC-XerD complex is essential to convert dimers of the bacterial chromosome into monomers to permit their segregation at cell division. It also contributes to the segregational stability of plasmids. In Staphylococcus saprophyticus subsp. saprophyticus (strain ATCC 15305 / DSM 20229 / NCIMB 8711 / NCTC 7292 / S-41), this protein is Tyrosine recombinase XerD.